Consider the following 448-residue polypeptide: Phosphoglucosamine mutase (448 aa).

Ser100 serves as the catalytic Phosphoserine intermediate. The Mg(2+) site is built by Ser100, Asp240, Asp242, and Asp244. Position 100 is a phosphoserine (Ser100).

It belongs to the phosphohexose mutase family. The cofactor is Mg(2+). In terms of processing, activated by phosphorylation.

It carries out the reaction alpha-D-glucosamine 1-phosphate = D-glucosamine 6-phosphate. Functionally, catalyzes the conversion of glucosamine-6-phosphate to glucosamine-1-phosphate. In Bacillus licheniformis (strain ATCC 14580 / DSM 13 / JCM 2505 / CCUG 7422 / NBRC 12200 / NCIMB 9375 / NCTC 10341 / NRRL NRS-1264 / Gibson 46), this protein is Phosphoglucosamine mutase.